The sequence spans 437 residues: GTPase Obg (437 aa).

In terms of domain architecture, Obg spans 2–160 (SMFLDTAKIS…RELQLELKIL (159 aa)). Positions 127 to 146 (GNIRFATPRNPAPEIAENGE) are disordered. In terms of domain architecture, OBG-type G spans 161–338 (ADVGLVGFPS…LLEATAELLD (178 aa)). GTP contacts are provided by residues 167–174 (GFPSVGKS), 192–196 (FTTIV), 214–217 (DLPG), 284–287 (NKMD), and 319–321 (SSL). Residues Ser-174 and Thr-194 each contribute to the Mg(2+) site. The OCT domain occupies 359 to 437 (GFNEEERPFE…IGNFEFEFVD (79 aa)).

This sequence belongs to the TRAFAC class OBG-HflX-like GTPase superfamily. OBG GTPase family. As to quaternary structure, monomer. Requires Mg(2+) as cofactor.

Its subcellular location is the cytoplasm. An essential GTPase which binds GTP, GDP and possibly (p)ppGpp with moderate affinity, with high nucleotide exchange rates and a fairly low GTP hydrolysis rate. Plays a role in control of the cell cycle, stress response, ribosome biogenesis and in those bacteria that undergo differentiation, in morphogenesis control. This chain is GTPase Obg, found in Streptococcus thermophilus (strain ATCC BAA-491 / LMD-9).